The chain runs to 647 residues: Threonine--tRNA ligase (647 aa).

Residues Met1–Thr61 enclose the TGS domain. The catalytic stretch occupies residues Asp242 to Pro540. Cys336, His387, and His517 together coordinate Zn(2+).

This sequence belongs to the class-II aminoacyl-tRNA synthetase family. In terms of assembly, homodimer. The cofactor is Zn(2+).

Its subcellular location is the cytoplasm. It carries out the reaction tRNA(Thr) + L-threonine + ATP = L-threonyl-tRNA(Thr) + AMP + diphosphate + H(+). Functionally, catalyzes the attachment of threonine to tRNA(Thr) in a two-step reaction: L-threonine is first activated by ATP to form Thr-AMP and then transferred to the acceptor end of tRNA(Thr). Also edits incorrectly charged L-seryl-tRNA(Thr). In Streptococcus gordonii (strain Challis / ATCC 35105 / BCRC 15272 / CH1 / DL1 / V288), this protein is Threonine--tRNA ligase.